Here is a 211-residue protein sequence, read N- to C-terminus: Uridine kinase (211 aa).

12 to 19 (GGSGSGKT) provides a ligand contact to ATP.

This sequence belongs to the uridine kinase family.

Its subcellular location is the cytoplasm. The catalysed reaction is uridine + ATP = UMP + ADP + H(+). It catalyses the reaction cytidine + ATP = CMP + ADP + H(+). It functions in the pathway pyrimidine metabolism; CTP biosynthesis via salvage pathway; CTP from cytidine: step 1/3. It participates in pyrimidine metabolism; UMP biosynthesis via salvage pathway; UMP from uridine: step 1/1. The sequence is that of Uridine kinase from Geobacillus kaustophilus (strain HTA426).